The following is a 238-amino-acid chain: Large ribosomal subunit protein uL2 (238 aa).

Residues 1–11 (MGKRLISQNRG) are compositionally biased toward polar residues. 2 disordered regions span residues 1–22 (MGKR…APSH) and 202–223 (FGGG…APPG).

This sequence belongs to the universal ribosomal protein uL2 family. Part of the 50S ribosomal subunit. Forms a bridge to the 30S subunit in the 70S ribosome.

Its function is as follows. One of the primary rRNA binding proteins. Required for association of the 30S and 50S subunits to form the 70S ribosome, for tRNA binding and peptide bond formation. It has been suggested to have peptidyltransferase activity; this is somewhat controversial. Makes several contacts with the 16S rRNA in the 70S ribosome. This chain is Large ribosomal subunit protein uL2, found in Methanosarcina mazei (strain ATCC BAA-159 / DSM 3647 / Goe1 / Go1 / JCM 11833 / OCM 88) (Methanosarcina frisia).